The sequence spans 429 residues: Arginine biosynthesis bifunctional protein ArgJ (429 aa).

Substrate-binding residues include Thr181, Lys207, Thr218, Glu302, Asn424, and Ser429. Thr218 (nucleophile) is an active-site residue.

This sequence belongs to the ArgJ family. In terms of assembly, heterotetramer of two alpha and two beta chains.

It localises to the cytoplasm. The catalysed reaction is N(2)-acetyl-L-ornithine + L-glutamate = N-acetyl-L-glutamate + L-ornithine. It carries out the reaction L-glutamate + acetyl-CoA = N-acetyl-L-glutamate + CoA + H(+). Its pathway is amino-acid biosynthesis; L-arginine biosynthesis; L-ornithine and N-acetyl-L-glutamate from L-glutamate and N(2)-acetyl-L-ornithine (cyclic): step 1/1. It functions in the pathway amino-acid biosynthesis; L-arginine biosynthesis; N(2)-acetyl-L-ornithine from L-glutamate: step 1/4. In terms of biological role, catalyzes two activities which are involved in the cyclic version of arginine biosynthesis: the synthesis of N-acetylglutamate from glutamate and acetyl-CoA as the acetyl donor, and of ornithine by transacetylation between N(2)-acetylornithine and glutamate. This is Arginine biosynthesis bifunctional protein ArgJ from Chlorobium chlorochromatii (strain CaD3).